The chain runs to 317 residues: MANRDVERVGKKNRGANNNYFYEESSGETHWTSWLIPAIVVANLAVFIAVMFVNDCPKKITGPNKECVARFLGRFSFQPLKENPLFGPSSSTLEKMGALEWRKVVHEHQGWRLLSCMWLHAGIIHLLTNMLSLIFIGIRLEQQFGFIRVGLIYLISGLGGSILSSLFLQESISVGASGALFGLLGAMLSELLTNWTIYANKAAALITLLFIIAINLALGMLPRVDNFAHIGGFLTGFCLGFVLLVRPQYGWEASRTNTSRTKRKYSMYQYVLFVVSVVLLVVGLTVALVMLFKGENGNKHCKWCHYLSCFPTSKWTC.

The next 7 membrane-spanning stretches (helical) occupy residues 33-53 (SWLI…VMFV), 118-138 (WLHA…FIGI), 149-169 (VGLI…LFLQ), 172-192 (ISVG…SELL), 202-222 (AAAL…GMLP), 224-244 (VDNF…FVLL), and 272-292 (LFVV…VMLF). Ser177 functions as the Nucleophile in the catalytic mechanism. The active-site Charge relay system is the His229.

This sequence belongs to the peptidase S54 family. Expressed in roots, seedlings, leaves, stems and flowers.

The protein resides in the golgi apparatus membrane. It carries out the reaction Cleaves type-1 transmembrane domains using a catalytic dyad composed of serine and histidine that are contributed by different transmembrane domains.. Functionally, rhomboid-type serine protease that catalyzes intramembrane proteolysis. Can cleave the Drosophila proteins Spitz and Keren. May function in pollen elongation. This is RHOMBOID-like protein 2 from Arabidopsis thaliana (Mouse-ear cress).